Consider the following 230-residue polypeptide: Ribosomal RNA small subunit methyltransferase G (230 aa).

S-adenosyl-L-methionine-binding positions include Gly-91, Leu-96, 142-143 (VE), and Arg-161.

It belongs to the methyltransferase superfamily. RNA methyltransferase RsmG family.

The protein resides in the cytoplasm. It carries out the reaction guanosine(527) in 16S rRNA + S-adenosyl-L-methionine = N(7)-methylguanosine(527) in 16S rRNA + S-adenosyl-L-homocysteine. Its function is as follows. Specifically methylates the N7 position of guanine in position 527 of 16S rRNA. In Burkholderia pseudomallei (strain K96243), this protein is Ribosomal RNA small subunit methyltransferase G.